A 283-amino-acid polypeptide reads, in one-letter code: Pantothenate synthetase (283 aa).

30 to 37 (MGYLHDGH) serves as a coordination point for ATP. Histidine 37 serves as the catalytic Proton donor. Position 61 (glutamine 61) interacts with (R)-pantoate. Glutamine 61 is a beta-alanine binding site. 148–151 (GQKD) contacts ATP. Glutamine 154 is a (R)-pantoate binding site. 185 to 188 (MSSR) contacts ATP.

This sequence belongs to the pantothenate synthetase family. As to quaternary structure, homodimer.

Its subcellular location is the cytoplasm. It carries out the reaction (R)-pantoate + beta-alanine + ATP = (R)-pantothenate + AMP + diphosphate + H(+). The protein operates within cofactor biosynthesis; (R)-pantothenate biosynthesis; (R)-pantothenate from (R)-pantoate and beta-alanine: step 1/1. Functionally, catalyzes the condensation of pantoate with beta-alanine in an ATP-dependent reaction via a pantoyl-adenylate intermediate. This Carboxydothermus hydrogenoformans (strain ATCC BAA-161 / DSM 6008 / Z-2901) protein is Pantothenate synthetase.